A 1045-amino-acid chain; its full sequence is Probable sucrose-phosphate synthase (1045 aa).

Basic and acidic residues-rich tracts occupy residues 93–115 (ENEEAQRKTKRRMELERGRREAT) and 124–137 (EGEKDISAHGDSTR). Disordered stretches follow at residues 93–141 (ENEE…PRLP), 222–243 (WSYGEPTEMLNPRDSNGFDDDD), and 662–692 (IASSRQRQPQWQRSSDEGLDNQEPESPSDSL). A compositionally biased stretch (low complexity) spans 664–674 (SSRQRQPQWQR).

It belongs to the glycosyltransferase 1 family. In terms of assembly, homodimer or homotetramer. In terms of tissue distribution, predominantly active in tap root.

The catalysed reaction is beta-D-fructose 6-phosphate + UDP-alpha-D-glucose = sucrose 6(F)-phosphate + UDP + H(+). Its pathway is glycan biosynthesis; sucrose biosynthesis; sucrose from D-fructose 6-phosphate and UDP-alpha-D-glucose: step 1/2. With respect to regulation, activity is regulated by phosphorylation and moderated by concentration of metabolites and light. Its function is as follows. Plays a role in photosynthetic sucrose synthesis by catalyzing the rate-limiting step of sucrose biosynthesis from UDP-glucose and fructose- 6-phosphate. Involved in the regulation of carbon partitioning in the leaves of plants. May regulate the synthesis of sucrose and therefore play a major role as a limiting factor in the export of photoassimilates out of the leaf. Plays a role for sucrose availability that is essential for plant growth and fiber elongation. This chain is Probable sucrose-phosphate synthase (SPS), found in Beta vulgaris (Sugar beet).